Here is a 553-residue protein sequence, read N- to C-terminus: COP9 signalosome complex subunit 10 (553 aa).

A compositionally biased stretch (acidic residues) spans 21–46; sequence AEMEEDSDEMGVYEEETSQGAEEEVP. Positions 21 to 47 are disordered; sequence AEMEEDSDEMGVYEEETSQGAEEEVPL. The PCI domain occupies 298–474; that stretch reads LRTHFSACLQ…DYVYFGDEPR (177 aa).

In terms of assembly, component of a COP9 signalosome-like (CSN) complex.

The protein localises to the cytoplasm. The protein resides in the nucleus. Its function is as follows. Component of the COP9 signalosome (CSN) complex that acts as an regulator of the ubiquitin (Ubl) conjugation pathway by mediating the deneddylation of the cullin subunit of SCF-type E3 ubiquitin-protein ligase complexes. The CSN complex is involved in the regulation of the mating pheromone response. This Eremothecium gossypii (strain ATCC 10895 / CBS 109.51 / FGSC 9923 / NRRL Y-1056) (Yeast) protein is COP9 signalosome complex subunit 10 (RRI2).